Here is a 55-residue protein sequence, read N- to C-terminus: uncharacterized protein (55 aa).

Residues 1-25 (MKNNDKKKEVQRKYREEIKKKKQKN) are disordered. Residues 35 to 55 (TIIVVTIIVLFIFFTYTLQGF) form a helical membrane-spanning segment.

It is found in the membrane. This is an uncharacterized protein from Bacillus subtilis (strain 168).